The sequence spans 372 residues: Ubl carboxyl-terminal hydrolase 18 (372 aa).

A disordered region spans residues 19–45 (SSQSPADLEEKKEEDSNMKREQPRERP). The span at 26 to 45 (LEEKKEEDSNMKREQPRERP) shows a compositional bias: basic and acidic residues. Residues 36 to 51 (MKREQPRERPRAWDYP) form a mediates interaction with IFNAR2 region. The interval 51–112 (PHGLVGLHNI…MLLLLEKMQD (62 aa)) is mediates interaction with STAT2. One can recognise a USP domain in the interval 55-370 (VGLHNIGQTC…TAYLLVYMKM (316 aa)). Cysteine 64 functions as the Nucleophile in the catalytic mechanism. The tract at residues 303–312 (ELFAVIAHVG) is mediates interaction with STAT2 and necessary for the negative regulation of the type I IFN signaling pathway. The segment at 313–372 (MADSGHYCVYIRNAVDGKWFCFNDSNICLVSWEDIQCTYGNPNYHWQETAYLLVYMKMEC) is mediates interaction with IFNAR2. Catalysis depends on histidine 318, which acts as the Proton acceptor.

Belongs to the peptidase C19 family. Interacts with STAT2; the interaction is direct. Interacts with IFNAR2; indirectly via STAT2, it negatively regulates the assembly of the ternary interferon-IFNAR1-IFNAR2 complex and inhibits type I interferon signaling. Interacts with STING1. Interacts with USP20.

Its subcellular location is the cytoplasm. It localises to the nucleus. The enzyme catalyses Thiol-dependent hydrolysis of ester, thioester, amide, peptide and isopeptide bonds formed by the C-terminal Gly of ubiquitin (a 76-residue protein attached to proteins as an intracellular targeting signal).. Its function is as follows. Interferon-induced ISG15-specific protease that plays a crucial role for maintaining a proper balance of ISG15-conjugated proteins in cells. Regulates protein ISGylation by efficiently cleaving ISG15 conjugates linked via isopeptide bonds. Regulates T-cell activation and T-helper 17 (Th17) cell differentiation by deubiquitinating TAK1, likely to keep TAK1-TAB complexes in steady conditions. In turn, restricts activation of NF-kappa-B, NFAT, and JNK as well as expression of IL2 in T-cells after TCR activation. Acts as a molecular adapter with USP20 to promote innate antiviral response through deubiquitinating STING1. Involved also in the negative regulation of the inflammatory response triggered by type I interferon. Upon recruitment by STAT2 to the type I interferon receptor subunit IFNAR2 interferes with the assembly of the ternary interferon-IFNAR1-IFNAR2 complex and acts as a negative regulator of the type I interferon signaling pathway. Functionally, has enzymatic activity similar to isoform 1 and interferes with type I interferon signaling. Major deISGylation enzyme for nuclear proteins. The sequence is that of Ubl carboxyl-terminal hydrolase 18 (USP18) from Homo sapiens (Human).